Reading from the N-terminus, the 331-residue chain is Putative mitochondrial 2-oxoglutarate/malate carrier protein (331 aa).

3 Solcar repeats span residues 39–128, 140–231, and 239–329; these read VRAA…FMSR, VGFK…AKAQ, and SSKV…LGWL. 6 helical membrane passes run 42 to 62, 103 to 121, 148 to 168, 199 to 219, 245 to 265, and 309 to 329; these read ALPF…IQPI, GLSA…RIGC, AGLA…LALI, GVAA…ALNF, LSAS…FDFV, and YVRI…LGWL.

It belongs to the mitochondrial carrier (TC 2.A.29) family.

It is found in the mitochondrion inner membrane. Catalyzes the transport of 2-oxoglutarate across the inner mitochondrial membrane. The chain is Putative mitochondrial 2-oxoglutarate/malate carrier protein (mic-33) from Neurospora crassa (strain ATCC 24698 / 74-OR23-1A / CBS 708.71 / DSM 1257 / FGSC 987).